The sequence spans 215 residues: MTKTLIVNAHPDFRNAAHYSVQLEQAFLQLFQTRFPNDTVDVLNLYDTVIPQATVPELLGIWEKQAQHVNLSIEEQRLFAINQQLLQQFKAHHRIVIAMPLHNFNVPARLKDYIDNILVARETFRYTENGSVGLMTDNYRVMLLQASGSIYTRNDRYTPMEFSRLYLDKMFTEIMGFDRFEIVRAQGLQTNGVAVSQALKQAKMDLKAAFERFYD.

It belongs to the azoreductase type 1 family. In terms of assembly, homodimer. It depends on FMN as a cofactor.

It carries out the reaction 2 a quinone + NADH + H(+) = 2 a 1,4-benzosemiquinone + NAD(+). It catalyses the reaction N,N-dimethyl-1,4-phenylenediamine + anthranilate + 2 NAD(+) = 2-(4-dimethylaminophenyl)diazenylbenzoate + 2 NADH + 2 H(+). Functionally, quinone reductase that provides resistance to thiol-specific stress caused by electrophilic quinones. Also exhibits azoreductase activity. Catalyzes the reductive cleavage of the azo bond in aromatic azo compounds to the corresponding amines. This Lactiplantibacillus plantarum (strain ATCC BAA-793 / NCIMB 8826 / WCFS1) (Lactobacillus plantarum) protein is FMN-dependent NADH:quinone oxidoreductase 1.